The following is a 338-amino-acid chain: Envelope glycoprotein K (338 aa).

Positions 1 to 30 (MLAVRSLQHLSTVVLITAYGLVLVWYTVFG) are cleaved as a signal peptide. Topologically, residues 31 to 121 (ASPLHRCIYA…VNCLETLWYT (91 aa)) are extracellular. The interval 31–121 (ASPLHRCIYA…VNCLETLWYT (91 aa)) is involved in fusion. Residues asparagine 48 and asparagine 58 are each glycosylated (N-linked (GlcNAc...) asparagine; by host). Residues 122–140 (RVRLVVVGWFLYLAFVALH) traverse the membrane as a helical segment. Residues 141-212 (QRRCMFGVVS…DPVTFLYHRP (72 aa)) lie on the Cytoplasmic side of the membrane. Residues 213–233 (AIGVIVGCELMLRFVAVGLIV) form a helical membrane-spanning segment. The Extracellular segment spans residues 234–243 (GTAFISRGAC). A helical transmembrane segment spans residues 244 to 264 (AITYPLFLTITTWCFVSTIGL). Residues 265-301 (TELYCILRRGPAPKNADKAAAPGRSKGLSGVCGRCCS) are Cytoplasmic-facing. The tract at residues 265-301 (TELYCILRRGPAPKNADKAAAPGRSKGLSGVCGRCCS) is interaction with UL20. Residues 302–322 (IILSGIAVRLCYIAVVAGVVL) form a helical membrane-spanning segment. At 323 to 338 (VALHYEQEIQRRLFDV) the chain is on the extracellular side.

The protein belongs to the alphaherpesvirinae glycoprotein K family. As to quaternary structure, interacts (via UL20 interaction region) with protein UL20 (via N-terminus); this interaction probably plays a role in the coordinate transport of protein UL20 and gK to the trans-Golgi network (TGN), and is required for the cell surface expression of gK. Post-translationally, N-glycosylated.

The protein resides in the host cell membrane. Its subcellular location is the host endosome membrane. It localises to the host Golgi apparatus membrane. In terms of biological role, glycoprotein that probably modulates membrane fusion events during secondary envelopment of cytoplasmic capsids that bud into specific trans-Golgi network (TGN)-derived membranes. Also plays a role, together with gB, in virus-induced cell-to-cell fusion (syncytia formation). Seems to block fusion of virions with infected-cell membranes. This Homo sapiens (Human) protein is Envelope glycoprotein K (gK).